The chain runs to 338 residues: Ketol-acid reductoisomerase (NADP(+)) (338 aa).

A KARI N-terminal Rossmann domain is found at Met1–Thr181. Residues Tyr24–Gln27, Arg47, Ser50, Ser52, and Asp82–Gln85 contribute to the NADP(+) site. His107 is a catalytic residue. Gly133 is an NADP(+) binding site. One can recognise a KARI C-terminal knotted domain in the interval Thr182–Ile327. Asp190, Glu194, Glu226, and Glu230 together coordinate Mg(2+). Ser251 is a substrate binding site.

It belongs to the ketol-acid reductoisomerase family. Mg(2+) serves as cofactor.

It catalyses the reaction (2R)-2,3-dihydroxy-3-methylbutanoate + NADP(+) = (2S)-2-acetolactate + NADPH + H(+). It carries out the reaction (2R,3R)-2,3-dihydroxy-3-methylpentanoate + NADP(+) = (S)-2-ethyl-2-hydroxy-3-oxobutanoate + NADPH + H(+). Its pathway is amino-acid biosynthesis; L-isoleucine biosynthesis; L-isoleucine from 2-oxobutanoate: step 2/4. The protein operates within amino-acid biosynthesis; L-valine biosynthesis; L-valine from pyruvate: step 2/4. Its function is as follows. Involved in the biosynthesis of branched-chain amino acids (BCAA). Catalyzes an alkyl-migration followed by a ketol-acid reduction of (S)-2-acetolactate (S2AL) to yield (R)-2,3-dihydroxy-isovalerate. In the isomerase reaction, S2AL is rearranged via a Mg-dependent methyl migration to produce 3-hydroxy-3-methyl-2-ketobutyrate (HMKB). In the reductase reaction, this 2-ketoacid undergoes a metal-dependent reduction by NADPH to yield (R)-2,3-dihydroxy-isovalerate. The protein is Ketol-acid reductoisomerase (NADP(+)) of Chromohalobacter salexigens (strain ATCC BAA-138 / DSM 3043 / CIP 106854 / NCIMB 13768 / 1H11).